A 375-amino-acid chain; its full sequence is Chaperone protein DnaJ (375 aa).

Residues Asp5–Gly70 enclose the J domain. The segment at Gly134 to Gln212 adopts a CR-type zinc-finger fold. Cys147, Cys150, Cys164, Cys167, Cys186, Cys189, Cys200, and Cys203 together coordinate Zn(2+). 4 CXXCXGXG motif repeats span residues Cys147–Gly154, Cys164–Gly171, Cys186–Gly193, and Cys200–Gly207.

The protein belongs to the DnaJ family. In terms of assembly, homodimer. It depends on Zn(2+) as a cofactor.

The protein resides in the cytoplasm. In terms of biological role, participates actively in the response to hyperosmotic and heat shock by preventing the aggregation of stress-denatured proteins and by disaggregating proteins, also in an autonomous, DnaK-independent fashion. Unfolded proteins bind initially to DnaJ; upon interaction with the DnaJ-bound protein, DnaK hydrolyzes its bound ATP, resulting in the formation of a stable complex. GrpE releases ADP from DnaK; ATP binding to DnaK triggers the release of the substrate protein, thus completing the reaction cycle. Several rounds of ATP-dependent interactions between DnaJ, DnaK and GrpE are required for fully efficient folding. Also involved, together with DnaK and GrpE, in the DNA replication of plasmids through activation of initiation proteins. The protein is Chaperone protein DnaJ of Azoarcus sp. (strain BH72).